The sequence spans 119 residues: Aspartate 1-decarboxylase (119 aa).

Residue Ser25 is the Schiff-base intermediate with substrate; via pyruvic acid of the active site. Ser25 is modified (pyruvic acid (Ser)). Residue Thr57 participates in substrate binding. Tyr58 serves as the catalytic Proton donor. Residue 73-75 (GAA) coordinates substrate.

This sequence belongs to the PanD family. As to quaternary structure, heterooctamer of four alpha and four beta subunits. The cofactor is pyruvate. In terms of processing, is synthesized initially as an inactive proenzyme, which is activated by self-cleavage at a specific serine bond to produce a beta-subunit with a hydroxyl group at its C-terminus and an alpha-subunit with a pyruvoyl group at its N-terminus.

Its subcellular location is the cytoplasm. It carries out the reaction L-aspartate + H(+) = beta-alanine + CO2. The protein operates within cofactor biosynthesis; (R)-pantothenate biosynthesis; beta-alanine from L-aspartate: step 1/1. Catalyzes the pyruvoyl-dependent decarboxylation of aspartate to produce beta-alanine. The polypeptide is Aspartate 1-decarboxylase (Ruthia magnifica subsp. Calyptogena magnifica).